Consider the following 280-residue polypeptide: Fructose-1,6-bisphosphatase class 1 (280 aa).

4 residues coordinate Mg(2+): glutamate 64, aspartate 83, leucine 85, and aspartate 86. Residues 86–89 (DGSS), tyrosine 189, and lysine 220 each bind substrate. A Mg(2+)-binding site is contributed by glutamate 226.

Belongs to the FBPase class 1 family. In terms of assembly, homotetramer. Mg(2+) is required as a cofactor.

It localises to the cytoplasm. It carries out the reaction beta-D-fructose 1,6-bisphosphate + H2O = beta-D-fructose 6-phosphate + phosphate. The protein operates within carbohydrate biosynthesis; gluconeogenesis. The chain is Fructose-1,6-bisphosphatase class 1 from Campylobacter jejuni subsp. jejuni serotype O:2 (strain ATCC 700819 / NCTC 11168).